A 545-amino-acid chain; its full sequence is CTP synthase (545 aa).

Positions 1–265 (MTKYIFITGG…DEIVVKKLSL (265 aa)) are amidoligase domain. Ser-13 contacts CTP. Ser-13 contributes to the UTP binding site. Residues 14–19 (SLGKGI) and Asp-71 contribute to the ATP site. Residues Asp-71 and Glu-139 each coordinate Mg(2+). CTP contacts are provided by residues 146–148 (DIE), 186–191 (KTKPTQ), and Lys-222. UTP-binding positions include 186-191 (KTKPTQ) and Lys-222. A Glutamine amidotransferase type-1 domain is found at 290–541 (KIAMVGKYTE…VFAARIHHQE (252 aa)). Position 351 (Gly-351) interacts with L-glutamine. The active-site Nucleophile; for glutamine hydrolysis is Cys-378. L-glutamine-binding positions include 379-382 (LGMQ), Glu-402, and Arg-469. Residues His-514 and Glu-516 contribute to the active site.

It belongs to the CTP synthase family. As to quaternary structure, homotetramer.

It catalyses the reaction UTP + L-glutamine + ATP + H2O = CTP + L-glutamate + ADP + phosphate + 2 H(+). It carries out the reaction L-glutamine + H2O = L-glutamate + NH4(+). The catalysed reaction is UTP + NH4(+) + ATP = CTP + ADP + phosphate + 2 H(+). It participates in pyrimidine metabolism; CTP biosynthesis via de novo pathway; CTP from UDP: step 2/2. Its activity is regulated as follows. Allosterically activated by GTP, when glutamine is the substrate; GTP has no effect on the reaction when ammonia is the substrate. The allosteric effector GTP functions by stabilizing the protein conformation that binds the tetrahedral intermediate(s) formed during glutamine hydrolysis. Inhibited by the product CTP, via allosteric rather than competitive inhibition. Catalyzes the ATP-dependent amination of UTP to CTP with either L-glutamine or ammonia as the source of nitrogen. Regulates intracellular CTP levels through interactions with the four ribonucleotide triphosphates. This Legionella pneumophila (strain Lens) protein is CTP synthase.